A 254-amino-acid polypeptide reads, in one-letter code: Leucyl/phenylalanyl-tRNA--protein transferase (254 aa).

This sequence belongs to the L/F-transferase family.

The protein resides in the cytoplasm. It catalyses the reaction N-terminal L-lysyl-[protein] + L-leucyl-tRNA(Leu) = N-terminal L-leucyl-L-lysyl-[protein] + tRNA(Leu) + H(+). The catalysed reaction is N-terminal L-arginyl-[protein] + L-leucyl-tRNA(Leu) = N-terminal L-leucyl-L-arginyl-[protein] + tRNA(Leu) + H(+). The enzyme catalyses L-phenylalanyl-tRNA(Phe) + an N-terminal L-alpha-aminoacyl-[protein] = an N-terminal L-phenylalanyl-L-alpha-aminoacyl-[protein] + tRNA(Phe). Functionally, functions in the N-end rule pathway of protein degradation where it conjugates Leu, Phe and, less efficiently, Met from aminoacyl-tRNAs to the N-termini of proteins containing an N-terminal arginine or lysine. This Burkholderia orbicola (strain MC0-3) protein is Leucyl/phenylalanyl-tRNA--protein transferase.